The following is a 195-amino-acid chain: Imidazoleglycerol-phosphate dehydratase (195 aa).

The protein belongs to the imidazoleglycerol-phosphate dehydratase family.

Its subcellular location is the cytoplasm. It carries out the reaction D-erythro-1-(imidazol-4-yl)glycerol 3-phosphate = 3-(imidazol-4-yl)-2-oxopropyl phosphate + H2O. Its pathway is amino-acid biosynthesis; L-histidine biosynthesis; L-histidine from 5-phospho-alpha-D-ribose 1-diphosphate: step 6/9. The polypeptide is Imidazoleglycerol-phosphate dehydratase (Thiobacillus denitrificans (strain ATCC 25259 / T1)).